Here is a 206-residue protein sequence, read N- to C-terminus: N-(5'-phosphoribosyl)anthranilate isomerase (206 aa).

It belongs to the TrpF family.

The catalysed reaction is N-(5-phospho-beta-D-ribosyl)anthranilate = 1-(2-carboxyphenylamino)-1-deoxy-D-ribulose 5-phosphate. Its pathway is amino-acid biosynthesis; L-tryptophan biosynthesis; L-tryptophan from chorismate: step 3/5. The polypeptide is N-(5'-phosphoribosyl)anthranilate isomerase (Nitrosococcus oceani (strain ATCC 19707 / BCRC 17464 / JCM 30415 / NCIMB 11848 / C-107)).